The sequence spans 807 residues: Glycerol-3-phosphate acyltransferase (807 aa).

The HXXXXD motif motif lies at 305–310 (CHRSHM).

Belongs to the GPAT/DAPAT family.

The protein localises to the cell inner membrane. It catalyses the reaction sn-glycerol 3-phosphate + an acyl-CoA = a 1-acyl-sn-glycero-3-phosphate + CoA. It functions in the pathway phospholipid metabolism; CDP-diacylglycerol biosynthesis; CDP-diacylglycerol from sn-glycerol 3-phosphate: step 1/3. This is Glycerol-3-phosphate acyltransferase from Aliivibrio fischeri (strain ATCC 700601 / ES114) (Vibrio fischeri).